A 63-amino-acid chain; its full sequence is Large ribosomal subunit protein uL29 (63 aa).

It belongs to the universal ribosomal protein uL29 family.

The chain is Large ribosomal subunit protein uL29 from Yersinia pseudotuberculosis serotype O:1b (strain IP 31758).